Consider the following 453-residue polypeptide: Calcium-binding tyrosine phosphorylation-regulated protein (453 aa).

Residues Y12–E49 enclose the RIIa domain. Disordered regions lie at residues P86–A165, P246–S278, and I406–V453. A compositionally biased stretch (low complexity) spans D143–P154.

In terms of assembly, interacts with FSCB. Post-translationally, phosphorylated on tyrosine residues during in vitro capacitation. Dephosphorylation affects its ability to bind calcium. Expressed in spermatozoa.

The protein resides in the cytoplasm. It localises to the cytoskeleton. The protein localises to the cell projection. Its subcellular location is the cilium. It is found in the flagellum. In terms of biological role, may function as a regulator of both motility- and head-associated functions such as capacitation and the acrosome reaction. May bind calcium in vitro. This chain is Calcium-binding tyrosine phosphorylation-regulated protein (Cabyr), found in Mus musculus (Mouse).